We begin with the raw amino-acid sequence, 226 residues long: Putative mitochondrial outer membrane protein porin 5 (226 aa).

The protein belongs to the eukaryotic mitochondrial porin (TC 1.B.8.1) family.

It localises to the mitochondrion outer membrane. Functionally, putative channel that allows diffusion of small hydrophilic molecules through membranes. The protein is Putative mitochondrial outer membrane protein porin 5 (VDAC5) of Arabidopsis thaliana (Mouse-ear cress).